The chain runs to 366 residues: tRNA/tmRNA (uracil-C(5))-methyltransferase (366 aa).

The S-adenosyl-L-methionine site is built by Q190, Y218, N223, E239, and D299. Catalysis depends on C324, which acts as the Nucleophile. The active-site Proton acceptor is E358.

This sequence belongs to the class I-like SAM-binding methyltransferase superfamily. RNA M5U methyltransferase family. TrmA subfamily.

The enzyme catalyses uridine(54) in tRNA + S-adenosyl-L-methionine = 5-methyluridine(54) in tRNA + S-adenosyl-L-homocysteine + H(+). It carries out the reaction uridine(341) in tmRNA + S-adenosyl-L-methionine = 5-methyluridine(341) in tmRNA + S-adenosyl-L-homocysteine + H(+). Dual-specificity methyltransferase that catalyzes the formation of 5-methyluridine at position 54 (m5U54) in all tRNAs, and that of position 341 (m5U341) in tmRNA (transfer-mRNA). The protein is tRNA/tmRNA (uracil-C(5))-methyltransferase of Escherichia coli (strain UTI89 / UPEC).